Here is a 321-residue protein sequence, read N- to C-terminus: Aspartate carbamoyltransferase catalytic subunit (321 aa).

Carbamoyl phosphate contacts are provided by Arg57 and Thr58. Residue Lys85 participates in L-aspartate binding. Carbamoyl phosphate-binding residues include Arg107, His142, and Gln145. L-aspartate contacts are provided by Arg175 and Arg229. Carbamoyl phosphate contacts are provided by Gly270 and Pro271.

This sequence belongs to the aspartate/ornithine carbamoyltransferase superfamily. ATCase family. As to quaternary structure, heterododecamer (2C3:3R2) of six catalytic PyrB chains organized as two trimers (C3), and six regulatory PyrI chains organized as three dimers (R2).

The catalysed reaction is carbamoyl phosphate + L-aspartate = N-carbamoyl-L-aspartate + phosphate + H(+). It participates in pyrimidine metabolism; UMP biosynthesis via de novo pathway; (S)-dihydroorotate from bicarbonate: step 2/3. In terms of biological role, catalyzes the condensation of carbamoyl phosphate and aspartate to form carbamoyl aspartate and inorganic phosphate, the committed step in the de novo pyrimidine nucleotide biosynthesis pathway. This is Aspartate carbamoyltransferase catalytic subunit from Mycobacterium leprae (strain TN).